Consider the following 312-residue polypeptide: Pectinesterase inhibitor 10 (312 aa).

Residues 1 to 25 (MNILSQTQILHLSIAILLFITTSSS) form the signal peptide. 2 stretches are compositionally biased toward low complexity: residues 24–36 (SSSL…SPSL) and 44–55 (SPSSAPPSSLSP). The segment at 24 to 141 (SSSLSPSSSS…PSSSSSTYSN (118 aa)) is disordered. Residues 56–75 (SSPPPLSLSPSSPPPPPPSS) are compositionally biased toward pro residues. 2 stretches are compositionally biased toward low complexity: residues 76-85 (SPLSSLSPSL) and 93-104 (SPSSAPPSSLSP). A compositionally biased stretch (pro residues) spans 105 to 124 (SSPPPLSLSPSSPPPPPPSS). Low complexity predominate over residues 125-137 (SPLSSLSPSSSSS). N-linked (GlcNAc...) asparagine glycans are attached at residues Asn-141, Asn-153, Asn-185, and Asn-200. Residues Cys-152 and Cys-161 are joined by a disulfide bond. Cys-218 and Cys-268 are disulfide-bonded.

It belongs to the PMEI family.

Its subcellular location is the secreted. The protein localises to the extracellular space. The protein resides in the apoplast. Its function is as follows. Pectin methylesterase (PME) inhibitor involved in the maintenance of cell wall integrity in response to necrotrophic pathogens. Modulates PME activity and pectin methylesterification during infection by Botrytis cinerea and contributes to resistance against the pathogen. The sequence is that of Pectinesterase inhibitor 10 from Arabidopsis thaliana (Mouse-ear cress).